The primary structure comprises 152 residues: UPF0719 transmembrane protein MT2674.1 (152 aa).

The next 4 membrane-spanning stretches (helical) occupy residues 21-41 (VATV…FLMV), 62-82 (VVLA…AIYA), 92-112 (IGVA…LVIL), and 131-151 (PAVF…AAAL).

It belongs to the UPF0719 family.

It localises to the cell membrane. The polypeptide is UPF0719 transmembrane protein MT2674.1 (Mycobacterium tuberculosis (strain CDC 1551 / Oshkosh)).